Reading from the N-terminus, the 499-residue chain is Glycerol kinase (499 aa).

Thr17 serves as a coordination point for ADP. The ATP site is built by Thr17, Thr18, and Ser19. Thr17 is a sn-glycerol 3-phosphate binding site. ADP is bound at residue Arg21. Sn-glycerol 3-phosphate contacts are provided by Arg87, Glu88, Tyr139, and Asp243. 5 residues coordinate glycerol: Arg87, Glu88, Tyr139, Asp243, and Gln244. The ADP site is built by Thr265 and Gly308. Residues Thr265, Gly308, Gln312, and Gly409 each contribute to the ATP site. Positions 409 and 413 each coordinate ADP.

The protein belongs to the FGGY kinase family.

The catalysed reaction is glycerol + ATP = sn-glycerol 3-phosphate + ADP + H(+). It functions in the pathway polyol metabolism; glycerol degradation via glycerol kinase pathway; sn-glycerol 3-phosphate from glycerol: step 1/1. Inhibited by fructose 1,6-bisphosphate (FBP). Key enzyme in the regulation of glycerol uptake and metabolism. Catalyzes the phosphorylation of glycerol to yield sn-glycerol 3-phosphate. This is Glycerol kinase from Pseudomonas entomophila (strain L48).